Here is a 2376-residue protein sequence, read N- to C-terminus: Reducing polyketide synthase DEP5 (2376 aa).

The 431-residue stretch at 47–477 (LEPIAVVGMG…GTNAHTIIES (431 aa)) folds into the Ketosynthase family 3 (KS3) domain. Residues Cys-221, His-358, and His-399 each act as for beta-ketoacyl synthase activity in the active site. The malonyl-CoA:ACP transacylase (MAT) domain stretch occupies residues 593–906 (VFTGQGAQWA…QYLPTLVRGF (314 aa)). The active-site For malonyltransferase activity is Ser-685. The tract at residues 983 to 1121 (HDVLGQLTTG…GSIAIRTSAR (139 aa)) is N-terminal hotdog fold. Residues 983–1158 (HDVLGQLTTG…FNYGPTFQDM (176 aa)) form a dehydratase (DH) domain region. Positions 983 to 1286 (HDVLGQLTTG…CIAYEAAIPQ (304 aa)) constitute a PKS/mFAS DH domain. Residue His-1015 is the Proton acceptor; for dehydratase activity of the active site. Positions 1131–1286 (LPQRASGRLW…CIAYEAAIPQ (156 aa)) are C-terminal hotdog fold. Asp-1195 serves as the catalytic Proton donor; for dehydratase activity. The segment at 1659–1964 (GRIQAGKVVF…DSICDNKIVI (306 aa)) is enoyl reductase (ER) domain. The ketoreductase (KR) domain stretch occupies residues 1988-2163 (ATYLLVGCLG…KPACAVVLPM (176 aa)). A Carrier domain is found at 2289-2368 (DLVRDHFIAK…KFSELVCGAQ (80 aa)). O-(pantetheine 4'-phosphoryl)serine is present on Ser-2327.

It functions in the pathway polyketide biosynthesis. In terms of biological role, reducing polyketide synthase; part of the gene cluster that mediates the biosynthesis of depudecin, a highly oxidized eleven-carbon linear polyketide that acts as a histone deacetylase (HDAC) inhibitor and makes a small contribution to pathogenesis. The reducing polyketide synthase DEP5 is the central enzyme in depudecin biosynthesis by yielding the backbone polyketide chain. The monooxygenases DEP2 and DEP4, as well as the uncharacterized protein DEP1, then act as tailoring enzymes to modify the intermediate polyketide chain into depudecin. In Alternaria brassicicola (Dark leaf spot agent), this protein is Reducing polyketide synthase DEP5.